Here is a 974-residue protein sequence, read N- to C-terminus: Toxin subunit YenC1 (974 aa).

RHS repeat units follow at residues 165–179 (AGQC…GLNQ), 290–304 (GVLT…TQRL), 322–336 (FQDL…GNVL), 354–368 (VPEN…YQLV), 398–412 (NYIR…GNLM), 490–504 (SDSE…SQRV), 570–584 (NDEL…IGSS), 596–610 (SQEE…AVWM), and 630–644 (DATG…YYQP). The segment at 600–680 (YYPYGGTAVW…PIVLHDPDGL (81 aa)) is RHS-repeat associated core domain. Positions 699–940 (ISSLKGTGPF…GEVSASTLLE (242 aa)) are cytotoxic necrotising factor domain.

Belongs to the RHS family. In terms of assembly, semipurified toxin complex consists of at least YenA1-YenA2-YenB-YenC1-YenC2-Chi1-Chi2. The Yen-TC:K9 subcomplex is about 26 nm tall and 22 nm in diameter with 5-fold symmetry and 5 copies of YenA1, YenA2, Chi1 and Chi2; the chitinase subunits may be solvent accessible on the exterior the complex. The Yen-TC:K9 subcomplex has no insecticidal activity. The native complex with additional YenB, YenC1 and YenC2 subunits is 16 nm taller and is insecticidal; the toxicity-conferring subunits are present at about 1 copy each.

It localises to the secreted. Its activity is regulated as follows. Toxin complex is secreted when grown at 25 degrees Celsius or less; at higher temperatures the proteins are present intracellularly but not secreted. Part of an orally active toxin complex (TC) with strong insecticidal effects on larvae of the Coleoptera Costelytra zealandica, Acrossidius tasmania and Adoryphorus couloni and some Lepidoptera larvae. The TC has an endochitinase activity. The chain is Toxin subunit YenC1 from Yersinia entomophaga.